The following is a 174-amino-acid chain: Large ribosomal subunit protein uL10 (174 aa).

This sequence belongs to the universal ribosomal protein uL10 family. Part of the ribosomal stalk of the 50S ribosomal subunit. The N-terminus interacts with L11 and the large rRNA to form the base of the stalk. The C-terminus forms an elongated spine to which L12 dimers bind in a sequential fashion forming a multimeric L10(L12)X complex.

Forms part of the ribosomal stalk, playing a central role in the interaction of the ribosome with GTP-bound translation factors. The protein is Large ribosomal subunit protein uL10 of Vesicomyosocius okutanii subsp. Calyptogena okutanii (strain HA).